The primary structure comprises 714 residues: SEC14 domain and spectrin repeat-containing protein 1 (714 aa).

Positions 1–153 constitute a CRAL-TRIO domain; the sequence is MEASCILPVL…EFGGSLLYDH (153 aa). Spectrin repeat units follow at residues 275–381, 384–497, and 503–605; these read SQLE…NVLQ, YEFH…LKML, and FKCE…HRLE. The segment at 691–714 is disordered; it reads EAEQRLEEEEEEEEAALEVEPRES. Residues 696-707 are compositionally biased toward acidic residues; sequence LEEEEEEEEAAL.

Belongs to the SOLO family.

May act as the primary docking protein directing membrane turnover and assembly of the transient receptor potential channels trpc4 and trpc5. Binds phospholipids. The chain is SEC14 domain and spectrin repeat-containing protein 1 (sestd1) from Danio rerio (Zebrafish).